Reading from the N-terminus, the 429-residue chain is Violacein synthase (429 aa).

An FAD-binding site is contributed by 3–21 (RAIIVGGGLAGGLTAIYLA).

It depends on FAD as a cofactor.

It carries out the reaction protoviolaceinate + NADPH + O2 + H(+) = violaceinate + NADP(+) + H2O. It catalyses the reaction protoviolaceinate + NADH + O2 + H(+) = violaceinate + NAD(+) + H2O. The catalysed reaction is protodeoxyviolaceinate + NADPH + O2 + H(+) = deoxyviolaceinate + NADP(+) + H2O. The enzyme catalyses protodeoxyviolaceinate + NADH + O2 + H(+) = deoxyviolaceinate + NAD(+) + H2O. The protein operates within pigment biosynthesis; violacein biosynthesis. Catalyzes the hydroxylation of the 16-position of protoviolaceinate and protodeoxyviolaceinate to form violacein and deoxyviolacein, respectively. The protein is Violacein synthase (vioC) of Chromobacterium violaceum (strain ATCC 12472 / DSM 30191 / JCM 1249 / CCUG 213 / NBRC 12614 / NCIMB 9131 / NCTC 9757 / MK).